The chain runs to 456 residues: Armadillo repeat-containing X-linked protein 1 (456 aa).

Topologically, residues Met1–Glu6 are mitochondrial intermembrane. Mitochondrion outer membrane (MOM)-targeting sequence regions lie at residues Met1–Glu6 and Arg26–Lys36. The helical; Signal-anchor transmembrane segment at Ala7 to Trp29 threads the bilayer. Over Gly30–Leu456 the chain is Cytoplasmic. 2 disordered regions span residues Leu37–Gly106 and Arg139–Thr186. Over residues Trp38 to Glu50 the composition is skewed to acidic residues. Basic and acidic residues-rich tracts occupy residues Lys51 to Lys62 and Lys72 to Val81. Positions Ser162–Ser180 are enriched in basic residues. 4 ARM repeats span residues Pro198 to Ala238, Ser240 to Val279, Pro361 to Asp401, and Ser418 to Leu456.

It belongs to the eutherian X-chromosome-specific Armcx family. Interacts with MIRO1. Widely expressed in the adult nervous tissue, especially in the forebrain, including the cerebral cortex, hippocampus and thalamus.

It localises to the mitochondrion. The protein resides in the mitochondrion outer membrane. In terms of biological role, regulates mitochondrial transport during axon regeneration. Increases the proportion of motile mitochondria by recruiting stationary mitochondria into the motile pool. Enhances mitochondria movement and neurite growth in both adult axons and embryonic neurons. Promotes neuronal survival and axon regeneration after nerve injury. May link mitochondria to the Trak1-kinesin motor complex via its interaction with Miro1. This is Armadillo repeat-containing X-linked protein 1 (Armcx1) from Mus musculus (Mouse).